A 1052-amino-acid chain; its full sequence is Calmin (1052 aa).

The tract at residues 1 to 288 is actin-binding; it reads MAAQEWDWFQ…IVTYVAQFLE (288 aa). The Calponin-homology (CH) 1 domain maps to 32-139; it reads NVQKRTFTRW…LIWNIILFFQ (108 aa). Low complexity predominate over residues 148–168; it reads SRSSPSSSLSPGSGGTDSDSS. Residues 148 to 178 form a disordered region; sequence SRSSPSSSLSPGSGGTDSDSSYPPTPTTERS. The 105-residue stretch at 187–291 folds into the Calponin-homology (CH) 2 domain; sequence RKAIKTLLSW…YVAQFLERFP (105 aa). 4 disordered regions span residues 391-420, 455-545, 585-727, and 758-929; these read STGKTGSIAEPTPESSILSTRKDGRRSNSL, KATK…TLLA, STSQ…SPPL, and GEDL…DSSI. Composition is skewed to basic and acidic residues over residues 455-465 and 472-495; these read KATKELSKQDG and VSKEKKKSEQEARLVLEAASDKVP. The segment covering 509–529 has biased composition (polar residues); sequence AQPSQDSSFCNGTVESPSSQG. Ser-537 carries the phosphoserine modification. 3 stretches are compositionally biased toward basic and acidic residues: residues 594–614, 622–651, and 659–669; these read PSSHEKTRGEEEGSENHAEKP, PRAETEAAESRLEPKKLEPPPKDPEQEDQG, and PADKKPKVYEK. Ser-679 is subject to Phosphoserine. A Phosphothreonine modification is found at Thr-710. Over residues 711-720 the composition is skewed to basic and acidic residues; the sequence is LRSHSEEGLD. Ser-724 bears the Phosphoserine mark. Over residues 759 to 773 the composition is skewed to basic and acidic residues; sequence EDLKSEDTDLEHPED. Positions 780–791 are enriched in acidic residues; it reads REEEADEDEEEA. The segment covering 792-801 has biased composition (low complexity); that stretch reads QSSQSSCSFS. Basic and acidic residues predominate over residues 836 to 849; it reads SHEDHQPKETKENG. Phosphoserine is present on Ser-856. The segment covering 880-889 has biased composition (basic residues); it reads SKKKEKRKHM. Ser-925 carries the post-translational modification Phosphoserine. Residues 1027 to 1047 traverse the membrane as a helical; Anchor for type IV membrane protein segment; it reads VIYFILFLWLLVYCLLLFPQL.

In terms of tissue distribution, expressed in testis. Expressed during testis maturation process and in maturing spermatids. In brain, it is expressed in neurons of the hippocampus, cerebral cortex, and thalamus, Purkinje cells, and also in the choroid plexus and ependymal cells. Expressed predominantly in dendrites and cell bodies of the neurons, but not in axons. The level of expression increases during the period of maturation of the mouse brain after birth.

Its subcellular location is the membrane. It localises to the cytoplasm. The chain is Calmin (Clmn) from Mus musculus (Mouse).